The sequence spans 174 residues: uncharacterized protein (174 aa).

The first 31 residues, 1–31 (MCCVYRMNRPASGLTVVFCGKLSGKPGPKSA), serve as a signal peptide directing secretion. The segment at 39–59 (KSGADDGGENPRFFSAGPRTE) is disordered.

This is an uncharacterized protein from Escherichia coli (strain K12).